Consider the following 378-residue polypeptide: Putative glutamate--cysteine ligase 2 (378 aa).

Belongs to the glutamate--cysteine ligase type 2 family. YbdK subfamily.

The catalysed reaction is L-cysteine + L-glutamate + ATP = gamma-L-glutamyl-L-cysteine + ADP + phosphate + H(+). In terms of biological role, ATP-dependent carboxylate-amine ligase which exhibits weak glutamate--cysteine ligase activity. The sequence is that of Putative glutamate--cysteine ligase 2 from Ectopseudomonas mendocina (strain ymp) (Pseudomonas mendocina).